Reading from the N-terminus, the 139-residue chain is Peptide methionine sulfoxide reductase MsrB (139 aa).

The region spanning 8–130 (DREWQRELSP…NSASLQLKTQ (123 aa)) is the MsrB domain. 4 residues coordinate Zn(2+): Cys47, Cys50, Cys96, and Cys99. Cys119 serves as the catalytic Nucleophile.

The protein belongs to the MsrB Met sulfoxide reductase family. The cofactor is Zn(2+).

The catalysed reaction is L-methionyl-[protein] + [thioredoxin]-disulfide + H2O = L-methionyl-(R)-S-oxide-[protein] + [thioredoxin]-dithiol. This is Peptide methionine sulfoxide reductase MsrB from Acinetobacter baumannii (strain SDF).